The chain runs to 380 residues: Cytochrome b (380 aa).

Helical transmembrane passes span 34–54 (FGSL…LLAM), 78–99 (WLIR…YFHI), 114–134 (WNTG…GYVL), and 179–199 (FFAL…IHLT). 2 residues coordinate heme b: His-84 and His-98. His-183 and His-197 together coordinate heme b. His-202 lines the a ubiquinone pocket. The next 4 membrane-spanning stretches (helical) occupy residues 227 to 247 (LKDI…ALFS), 289 to 309 (LGGV…PFLH), 321 to 341 (ISQL…WVGS), and 348 to 368 (FIII…VLFP).

It belongs to the cytochrome b family. As to quaternary structure, the cytochrome bc1 complex contains 11 subunits: 3 respiratory subunits (MT-CYB, CYC1 and UQCRFS1), 2 core proteins (UQCRC1 and UQCRC2) and 6 low-molecular weight proteins (UQCRH/QCR6, UQCRB/QCR7, UQCRQ/QCR8, UQCR10/QCR9, UQCR11/QCR10 and a cleavage product of UQCRFS1). This cytochrome bc1 complex then forms a dimer. Heme b is required as a cofactor.

Its subcellular location is the mitochondrion inner membrane. Functionally, component of the ubiquinol-cytochrome c reductase complex (complex III or cytochrome b-c1 complex) that is part of the mitochondrial respiratory chain. The b-c1 complex mediates electron transfer from ubiquinol to cytochrome c. Contributes to the generation of a proton gradient across the mitochondrial membrane that is then used for ATP synthesis. The sequence is that of Cytochrome b (MT-CYB) from Pachyptila turtur (Fairy prion).